Here is a 300-residue protein sequence, read N- to C-terminus: ESX-5 secretion-associated protein EspG5 (300 aa).

This sequence belongs to the EspG family. Interacts specifically with ESX-5-dependent PE/PPE proteins. Forms a 1:1:1 heterotrimeric complex with the PE25/PPE41 dimer, via PPE41. Binding of EspG5 does not cause conformational changes in the PE25/PPE41 dimer. Forms a 1:1:1 heterotrimeric complex with the PE8/PPE15 dimer, via PPE15.

The protein localises to the cytoplasm. Functionally, specific chaperone for cognate PE/PPE proteins. Plays an important role in preventing aggregation of PE/PPE dimers. The chain is ESX-5 secretion-associated protein EspG5 from Mycobacterium tuberculosis (strain ATCC 25618 / H37Rv).